The primary structure comprises 164 residues: Diphosphoinositol polyphosphate phosphohydrolase 3-alpha (164 aa).

Residues R9, 17 to 19 (KKR), and 38 to 40 (SSR) each bind substrate. One can recognise a Nudix hydrolase domain in the interval 17–144 (KKRAACLCFR…VHAEYLEKLK (128 aa)). 2 residues coordinate Mg(2+): G49 and E65. The Nudix box motif lies at 50-71 (GGMEPEEEPDGAAVREVYEEAG). The active-site Proton acceptor is E68. E69 is a binding site for Mg(2+). Substrate is bound by residues 89–91 (RKH), R115, and K133. A disordered region spans residues 144–164 (KLGGSPTNGNSAAPSPPESEP).

It belongs to the Nudix hydrolase family. DIPP subfamily. The cofactor is Mg(2+). Mn(2+) is required as a cofactor. Mainly expressed in testis, liver kidney and, at lower level, in heart, brain, spleen, lung and skeletal muscle.

It localises to the cytoplasm. The enzyme catalyses diphospho-myo-inositol polyphosphate + H2O = myo-inositol polyphosphate + phosphate.. The catalysed reaction is P(1),P(6)-bis(5'-adenosyl) hexaphosphate + H2O = adenosine 5'-pentaphosphate + AMP + 2 H(+). It carries out the reaction P(1),P(5)-bis(5'-adenosyl) pentaphosphate + H2O = adenosine 5'-tetraphosphate + AMP + 2 H(+). Functionally, cleaves a beta-phosphate from the diphosphate groups in PP-InsP5 (diphosphoinositol pentakisphosphate), suggesting that it may play a role in signal transduction. Also able to catalyze the hydrolysis of dinucleoside oligophosphates, with Ap6A and Ap5A being the preferred substrates. The major reaction products are ADP and p4a from Ap6A and ADP and ATP from Ap5A. Also able to hydrolyze 5-phosphoribose 1-diphosphate; however, the relevance of such activity in vivo remains unclear. This is Diphosphoinositol polyphosphate phosphohydrolase 3-alpha from Mus musculus (Mouse).